The following is a 147-amino-acid chain: Transcriptional regulator MraZ (147 aa).

2 consecutive SpoVT-AbrB domains span residues 5-52 (SHAI…PETE) and 81-124 (ATTL…SEEA).

Belongs to the MraZ family. In terms of assembly, forms oligomers.

It is found in the cytoplasm. It localises to the nucleoid. The polypeptide is Transcriptional regulator MraZ (Saccharophagus degradans (strain 2-40 / ATCC 43961 / DSM 17024)).